Here is a 164-residue protein sequence, read N- to C-terminus: UPF0304 protein YfbU (164 aa).

This sequence belongs to the UPF0304 family.

The polypeptide is UPF0304 protein YfbU (Shigella flexneri serotype 5b (strain 8401)).